The primary structure comprises 78 residues: Colicin-V immunity protein (78 aa).

This protein is able to protect a cell, which harbors the plasmid ColV encoding colicin V, against colicin V. The sequence is that of Colicin-V immunity protein (cvi) from Escherichia coli.